The sequence spans 450 residues: Ornithine decarboxylase (450 aa).

Lysine 59 carries the N6-(pyridoxal phosphate)lysine modification. Residues serine 190, glycine 227, and 264 to 267 contribute to the pyridoxal 5'-phosphate site; that span reads EPGR. Serine 293 carries the post-translational modification Phosphoserine; by CK2. 321–322 serves as a coordination point for substrate; sequence YD. The Proton donor; shared with dimeric partner role is filled by cysteine 350. Aspartate 351 contributes to the substrate binding site. Residue tyrosine 379 coordinates pyridoxal 5'-phosphate.

Belongs to the Orn/Lys/Arg decarboxylase class-II family. As to quaternary structure, homodimer. Only the dimer is catalytically active, as the active sites are constructed of residues from both monomers. Requires pyridoxal 5'-phosphate as cofactor.

The catalysed reaction is L-ornithine + H(+) = putrescine + CO2. It participates in amine and polyamine biosynthesis; putrescine biosynthesis via L-ornithine pathway; putrescine from L-ornithine: step 1/1. With respect to regulation, inhibited by antizymes (AZs) in response to polyamine levels. AZs inhibit the assembly of the functional homodimer by binding to ODC monomers and targeting them for ubiquitin-independent proteolytic destruction by the 26S proteasome. Functionally, catalyzes the first and rate-limiting step of polyamine biosynthesis that converts ornithine into putrescine, which is the precursor for the polyamines, spermidine and spermine. Polyamines are essential for cell proliferation and are implicated in cellular processes, ranging from DNA replication to apoptosis. The polypeptide is Ornithine decarboxylase (ODC1) (Gallus gallus (Chicken)).